A 440-amino-acid polypeptide reads, in one-letter code: Protein disulfide-isomerase 2-3 (440 aa).

The first 24 residues, 1-24 (MYKSPLTLLTLLTICFGFFDLSSA), serve as a signal peptide directing secretion. 2 Thioredoxin domains span residues 25 to 136 (LYGS…KQIK) and 154 to 269 (SKEK…ELVE). Residues Cys-60 and Cys-63 each act as nucleophile in the active site. A disulfide bridge links Cys-60 with Cys-63. A disordered region spans residues 143 to 163 (LEGKSKPTGGGSKEKKSEPSA). An N-linked (GlcNAc...) asparagine glycan is attached at Asn-168. Catalysis depends on nucleophile residues Cys-192 and Cys-195. Cys-192 and Cys-195 form a disulfide bridge. A Prevents secretion from ER motif is present at residues 437–440 (KDEL).

Belongs to the protein disulfide isomerase family. Widely expressed.

The protein localises to the endoplasmic reticulum lumen. The enzyme catalyses Catalyzes the rearrangement of -S-S- bonds in proteins.. Acts as a protein-folding catalyst that interacts with nascent polypeptides to catalyze the formation, isomerization, and reduction or oxidation of disulfide bonds. In Arabidopsis thaliana (Mouse-ear cress), this protein is Protein disulfide-isomerase 2-3 (PDIL2-3).